The following is a 315-amino-acid chain: Acetyl-coenzyme A carboxylase carboxyl transferase subunit alpha (315 aa).

The 254-residue stretch at 36-289 (LSKKRLELME…RKAVAAELKI (254 aa)) folds into the CoA carboxyltransferase C-terminal domain.

It belongs to the AccA family. Acetyl-CoA carboxylase is a heterohexamer composed of biotin carboxyl carrier protein (AccB), biotin carboxylase (AccC) and two subunits each of ACCase subunit alpha (AccA) and ACCase subunit beta (AccD).

The protein localises to the cytoplasm. The enzyme catalyses N(6)-carboxybiotinyl-L-lysyl-[protein] + acetyl-CoA = N(6)-biotinyl-L-lysyl-[protein] + malonyl-CoA. It functions in the pathway lipid metabolism; malonyl-CoA biosynthesis; malonyl-CoA from acetyl-CoA: step 1/1. In terms of biological role, component of the acetyl coenzyme A carboxylase (ACC) complex. First, biotin carboxylase catalyzes the carboxylation of biotin on its carrier protein (BCCP) and then the CO(2) group is transferred by the carboxyltransferase to acetyl-CoA to form malonyl-CoA. This is Acetyl-coenzyme A carboxylase carboxyl transferase subunit alpha from Francisella tularensis subsp. holarctica (strain FTNF002-00 / FTA).